Consider the following 453-residue polypeptide: MAARKSGSDIHNNGPVSYLDDVPFKLNEKFRCPSKVGLPIGFCLSDCNAILSDLQYDFNLERRTVQWGEELAKARAAEARAAEAIRTDSESERQAASQDAEVGLVGGKKARPSDEQDIVPPALKPVLAGLSHNAILTPLPAPSFGQTRPAPSNPAPQYLNLADFEREEDPFDKLELKTLDDKEELRTILQSQPQSSVSPPQLPPAEHRPVSPSTTPPLQAKTGIFHKPNGLVGLLDLDRGGVLGGQIDADRPCNIRSLTFPKLSDPGDSPLETPLSVYPVAPPRNLSNGTPPSLQRTASNNNTTLPQEQPVFAQNGTPKQSNPVTVTSHPPAGTTLLSLSPSERQCVETIVGMGYSYEGVLKAMQRQGQNVEQVLEYLFTHSRLCDRGFDATAVEECLEMYQGSEEKALEFLQLMSRFGEMGFERDTIKEVLLVHNNDQDKALEDLMTRATAS.

The region spanning 19-65 is the UMA domain; that stretch reads LDDVPFKLNEKFRCPSKVGLPIGFCLSDCNAILSDLQYDFNLERRTV. Positions 83–93 are enriched in basic and acidic residues; that stretch reads EAIRTDSESER. 3 disordered regions span residues 83 to 119, 189 to 223, and 260 to 335; these read EAIR…QDIV, LQSQ…AKTG, and FPKL…AGTT. The segment covering 189–199 has biased composition (low complexity); sequence LQSQPQSSVSP. Over residues 285 to 328 the composition is skewed to polar residues; it reads NLSNGTPPSLQRTASNNNTTLPQEQPVFAQNGTPKQSNPVTVTS. UBA domains follow at residues 340-381 and 403-449; these read SPSE…LFTH and GSEE…LMTR.

In terms of assembly, component of an ESCRT-I complex (endosomal sorting complex required for transport I).

The protein localises to the cytoplasm. Its subcellular location is the cytosol. It localises to the endosome. Functionally, component of the ESCRT-I complex, a regulator of vesicular trafficking process. Binds to ubiquitinated cargo proteins and is required for the sorting of endocytic ubiquitinated cargos into multivesicular bodies (MVBs). This chain is Ubiquitin-associated protein 1, found in Danio rerio (Zebrafish).